Consider the following 763-residue polypeptide: Phosphoglycerol transferase I (763 aa).

Helical transmembrane passes span 1–21 (MSEL…AWKA), 26–46 (WWFA…ITLY), 77–97 (ILPG…LGWI), and 108–128 (FGYS…SPAF).

This sequence belongs to the OpgB family.

The protein localises to the cell inner membrane. The enzyme catalyses a phosphatidylglycerol + a membrane-derived-oligosaccharide D-glucose = a 1,2-diacyl-sn-glycerol + a membrane-derived-oligosaccharide 6-(glycerophospho)-D-glucose.. It participates in glycan metabolism; osmoregulated periplasmic glucan (OPG) biosynthesis. Its function is as follows. Transfers a phosphoglycerol residue from phosphatidylglycerol to the membrane-bound nascent glucan backbones. The polypeptide is Phosphoglycerol transferase I (Escherichia fergusonii (strain ATCC 35469 / DSM 13698 / CCUG 18766 / IAM 14443 / JCM 21226 / LMG 7866 / NBRC 102419 / NCTC 12128 / CDC 0568-73)).